We begin with the raw amino-acid sequence, 301 residues long: uncharacterized protein (301 aa).

Thr47 serves as the catalytic Charge relay system. Tyr136 functions as the Proton donor in the catalytic mechanism. Catalysis depends on Lys165, which acts as the Schiff-base intermediate with substrate.

It belongs to the DapA family. Homotetramer.

It localises to the cytoplasm. This is an uncharacterized protein from Thermofilum pendens (strain DSM 2475 / Hrk 5).